The chain runs to 1476 residues: ABC-type transporter frbG (1476 aa).

5 consecutive transmembrane segments (helical) span residues 26 to 46, 64 to 84, 97 to 117, 122 to 142, and 146 to 166; these read LLFEEAVLAAVPLGLCVVLAL, LYYAKLTALFLLASVQLVQLI, SIAIAAVSFASTIVFIGLCHL, SAKPSDLLTLYFVTCIAFDII, and TLWIVSGGTAVASTFTVGLVL. An N-linked (GlcNAc...) asparagine glycan is attached at Asn-244. Transmembrane regions (helical) follow at residues 266–286, 302–322, 380–400, and 409–429; these read FLAGVLPRLALTGFTFAQPFL, AGATGTWLIVAYAGVYIGIAI, LQTMHQAWASFVDICLATWLL, and IPSVGFSLLCVVFGGGVAVMA. Residues 274 to 553 form the ABC transmembrane type-1 1 domain; sequence LALTGFTFAQ…FVHSAVNLML (280 aa). Residue Asn-464 is glycosylated (N-linked (GlcNAc...) asparagine). The next 2 helical transmembrane spans lie at 487 to 507 and 533 to 553; these read CLVFMVSLTYLSNVFAPIIGF and IFALLTEGVGSFVHSAVNLML. In terms of domain architecture, ABC transporter 1 spans 619–845; the sequence is IQARDTNIGW…VTAHVHNQTS (227 aa). 652–659 is an ATP binding site; sequence GPTNSGKS. Residues Asn-694, Asn-776, Asn-805, and Asn-842 are each glycosylated (N-linked (GlcNAc...) asparagine). Transmembrane regions (helical) follow at residues 898–918, 936–956, 1017–1037, 1121–1141, and 1151–1171; these read AVFLALCMALVFAMVFPSIWV, YLLVYFFLGVAALIALIGGGS, LFAFITCIAQAIVVCVSSPFV, LGLVLDLVVAGIAILLAIVIV, and GFLGIALTSLVSFGLNLGGFI. An ABC transmembrane type-1 2 domain is found at 898–1179; it reads AVFLALCMAL…FIGGWTGLET (282 aa). In terms of domain architecture, ABC transporter 2 spans 1216 to 1447; it reads IVFDDVTASY…LSSSSPTSSP (232 aa). Residue Asn-1235 is glycosylated (N-linked (GlcNAc...) asparagine). Residue 1250 to 1257 participates in ATP binding; it reads GRTGSGKS.

This sequence belongs to the ABC transporter superfamily. ABCC family. Conjugate transporter (TC 3.A.1.208) subfamily.

Its subcellular location is the cell membrane. Functionally, ABC-type transporter; part of the gene cluster that mediates the biosynthesis of the antifungal antibiotic FR901469, an inhibitor of beta-1,3-glucansynthase, exerting antifungal activity against the pathogenes Candida albicans and Aspergillus fumigatus. FR901469 is a cyclic depsipeptide containing 12 amino acid residues and a fatty acid chain. Probably involved in the secretion of FR901469. The sequence is that of ABC-type transporter frbG from Dothideomycetidae sp. (strain 11243) (Fungal sp. (strain No.11243)).